Here is a 79-residue protein sequence, read N- to C-terminus: Ornithine decarboxylase (79 aa).

Pyridoxal 5'-phosphate-binding positions include serine 8, glycine 45, and 75 to 78 (EPGR).

This sequence belongs to the Orn/Lys/Arg decarboxylase class-II family. As to quaternary structure, homodimer. Only the dimer is catalytically active, as the active sites are constructed of residues from both monomers. It depends on pyridoxal 5'-phosphate as a cofactor.

The protein localises to the cytoplasm. The enzyme catalyses L-ornithine + H(+) = putrescine + CO2. The protein operates within amine and polyamine biosynthesis; putrescine biosynthesis via L-ornithine pathway; putrescine from L-ornithine: step 1/1. With respect to regulation, inhibited by antizyme (AZ) OAZ1 in response to polyamine levels. AZ inhibits the assembly of the functional homodimer by binding to ODC monomers and targeting them for ubiquitin-independent proteolytic destruction by the 26S proteasome. Functionally, catalyzes the first and rate-limiting step of polyamine biosynthesis that converts ornithine into putrescine, which is the precursor for the polyamines, spermidine and spermine. Polyamines are essential for cell proliferation and are implicated in cellular processes, ranging from DNA replication to apoptosis. This is Ornithine decarboxylase (ODC) from Paracoccidioides brasiliensis.